The sequence spans 119 residues: Urease subunit beta (119 aa).

It belongs to the urease beta subunit family. In terms of assembly, heterotrimer of UreA (gamma), UreB (beta) and UreC (alpha) subunits. Three heterotrimers associate to form the active enzyme.

It localises to the cytoplasm. The catalysed reaction is urea + 2 H2O + H(+) = hydrogencarbonate + 2 NH4(+). Its pathway is nitrogen metabolism; urea degradation; CO(2) and NH(3) from urea (urease route): step 1/1. The chain is Urease subunit beta from Tolumonas auensis (strain DSM 9187 / NBRC 110442 / TA 4).